The following is a 206-amino-acid chain: Small ribosomal subunit protein uS4 (206 aa).

The region spanning 96-157 (RRLDNVVYRM…KAKKQVRIQD (62 aa)) is the S4 RNA-binding domain.

This sequence belongs to the universal ribosomal protein uS4 family. As to quaternary structure, part of the 30S ribosomal subunit. Contacts protein S5. The interaction surface between S4 and S5 is involved in control of translational fidelity.

Functionally, one of the primary rRNA binding proteins, it binds directly to 16S rRNA where it nucleates assembly of the body of the 30S subunit. Its function is as follows. With S5 and S12 plays an important role in translational accuracy. This Thioalkalivibrio sulfidiphilus (strain HL-EbGR7) protein is Small ribosomal subunit protein uS4.